Reading from the N-terminus, the 202-residue chain is Transmembrane protein 223 (202 aa).

Over 1-43 (MAAPWRRWPTGLLAVLRPLLTCRPLQGTTLQRDVLLFEHDRGR) the chain is Mitochondrial matrix. A helical transmembrane segment spans residues 44–64 (FFTILGLFCAGQGVFWASMAV). The Mitochondrial intermembrane segment spans residues 65–97 (AAVSRPPVPVQPLDAEVPNRGPFDLRSALWRYG). The chain crosses the membrane as a helical span at residues 98–118 (LAVGCGAIGALVLGAGLLFSL). Over 119 to 202 (RSVRSVVLRA…DNTVGAYRSL (84 aa)) the chain is Mitochondrial matrix.

It belongs to the TMEM223 family. In terms of assembly, associates with the mitochondrial ribosome.

The protein resides in the mitochondrion inner membrane. Mitochondrial ribosome-associated protein involved in the first steps of cytochrome c oxidase complex (complex IV) biogenesis. Stimulates the translation of MT-CO1 mRNA and is a constituent of early MT-CO1 assembly intermediates. This chain is Transmembrane protein 223, found in Homo sapiens (Human).